Here is a 338-residue protein sequence, read N- to C-terminus: Sesquiterpene synthase 2 (338 aa).

Positions 93, 228, 232, and 236 each coordinate Mg(2+). Residues Asp-93–Asp-97 carry the DDXXD motif motif. Residues Asn-228–Glu-236 carry the NSE/DTE motif motif. 2 residues coordinate (2E,6E)-farnesyl diphosphate: Arg-316 and Tyr-317.

The protein belongs to the terpene synthase family. It depends on Mg(2+) as a cofactor.

It catalyses the reaction (2E,6E)-farnesyl diphosphate = alpha-copaene + diphosphate. The catalysed reaction is (2E,6E)-farnesyl diphosphate = beta-copaene + diphosphate. It carries out the reaction (2E,6E)-farnesyl diphosphate = alpha-muurolene + diphosphate. The enzyme catalyses (2E,6E)-farnesyl diphosphate = gamma-muurolene + diphosphate. It catalyses the reaction (2E,6E)-farnesyl diphosphate = delta-cadinene + diphosphate. In terms of biological role, terpene cyclase that catalyzes the cyclization of farnesyl diphosphate (FPP) to various sesquiterpenes, including alpha-copaene, beta-copaene, beta-elemene, alpha-muurolene, gamma-muurolene and delta-cadinene. In Postia placenta (strain ATCC 44394 / Madison 698-R) (Brown rot fungus), this protein is Sesquiterpene synthase 2.